The chain runs to 972 residues: Optomotor-blind protein (972 aa).

Disordered stretches follow at residues 44–248, 263–286, 508–563, 645–676, 805–889, and 918–972; these read SLLT…YFPA, PGLYPGGGLRFPPHHPGAHPHAHH, AKGF…HPHA, ADVERDGSDSSCSESVGGSTGGAFRPTSTGSP, AVTP…PSEL, and EEAA…GTDQ. 2 stretches are compositionally biased toward low complexity: residues 49 to 80 and 97 to 142; these read GSNNNNSGNTNSGNNNSNSNNNTNSNTNNTNN and SNHS…NNTS. Over residues 155–176 the composition is skewed to pro residues; the sequence is PPSPAGTPPPTIVGLPPIPPPN. Low complexity-rich tracts occupy residues 177-193 and 201-212; these read NNSSSSSSNNSASAAAH and AHHSPSTGAAAP. Pro residues predominate over residues 213-225; sequence PAGPTGLPPPTPP. Low complexity predominate over residues 226–237; it reads HHLQQQQQQQQH. Residues 274 to 286 are compositionally biased toward basic residues; that stretch reads PPHHPGAHPHAHH. The segment at residues 332-513 is a DNA-binding region (T-box); the sequence is LEGKDLWEKF…NNPFAKGFRD (182 aa). A compositionally biased stretch (gly residues) spans 818–831; sequence PPGGGGGGLGGGVV. Low complexity predominate over residues 835–851; that stretch reads PRSLSSSPRPRPASHSP. Serine 887 carries the post-translational modification Phosphoserine. Residues 952 to 963 show a composition bias toward basic residues; it reads HPHHQTHLHSHH.

In terms of tissue distribution, in third-instar larvae, expressed in the brain region that will develop into optic lobes and more weakly in the thoracic part of the ventral ganglion.

The protein localises to the nucleus. In terms of biological role, essential protein that may function as a transcription regulator. Vital for pupal development. Required for proper development of the optic lobes and wings, and abdominal pigmentation. This chain is Optomotor-blind protein (bi), found in Drosophila melanogaster (Fruit fly).